A 468-amino-acid polypeptide reads, in one-letter code: Ubiquitin carboxyl-terminal hydrolase 17-like protein B (468 aa).

Residues 1–20 (MVVALSFPEADPAMSPPSAP) are disordered. The 298-residue stretch at 51–348 (CGLQNTGNSC…NAYVLFYVQQ (298 aa)) folds into the USP domain. C60 functions as the Nucleophile in the catalytic mechanism. The Proton acceptor role is filled by H307. The segment at 374 to 449 (KKSGEKKHNK…GGQNLRNTEG (76 aa)) is disordered. Residues 394 to 403 (CENREKRSSK) show a composition bias toward basic and acidic residues. The span at 422–434 (GQKQENTKLTPQE) shows a compositional bias: polar residues.

Belongs to the peptidase C19 family. USP17 subfamily. In terms of processing, ubiquitinated. As to expression, detected in brain, heart, liver, lung, kidney, ovary and spleen.

The enzyme catalyses Thiol-dependent hydrolysis of ester, thioester, amide, peptide and isopeptide bonds formed by the C-terminal Gly of ubiquitin (a 76-residue protein attached to proteins as an intracellular targeting signal).. Its activity is regulated as follows. Inhibited by ubiquitin aldehyde. Deubiquitinating enzyme that removes conjugated ubiquitin from specific proteins to regulate different cellular processes. In Mus musculus (Mouse), this protein is Ubiquitin carboxyl-terminal hydrolase 17-like protein B.